Reading from the N-terminus, the 153-residue chain is Myoglobin (153 aa).

Residues 1–147 (MATACVKSLE…FSDECLDHLK (147 aa)) form the Globin domain. Residue His94 coordinates heme b.

It belongs to the globin family. In terms of assembly, homodimer; disulfide-linked. The N-terminus is blocked. In terms of tissue distribution, body wall globin is localized in cellular compartments belonging to the hypodermis, the dorsal, ventral and lateral cords, the nerve ring, and body wall muscle.

It localises to the cytoplasm. High oxygen affinity. Probably supplies oxygen needed for muscle activity. This chain is Myoglobin, found in Ascaris suum (Pig roundworm).